The sequence spans 642 residues: Chaperone protein HtpG (642 aa).

Residues 1-348 (MSTKIEQLEF…AQDLSLNVSR (348 aa)) are a; substrate-binding. The segment at 349–564 (EILQQDRQIR…AFSMSPALER (216 aa)) is b. The tract at residues 565-642 (MYRASGQPVP…MLANRLARTV (78 aa)) is c.

It belongs to the heat shock protein 90 family. In terms of assembly, homodimer.

It localises to the cytoplasm. Functionally, molecular chaperone. Has ATPase activity. The sequence is that of Chaperone protein HtpG from Rhodococcus jostii (strain RHA1).